Reading from the N-terminus, the 710-residue chain is Probable threonine--tRNA ligase 1, cytoplasmic (710 aa).

The disordered stretch occupies residues 1–35 (MSDSQENKPVETPTEVKPVAEKKPAAEKKEKKPAV). The span at 18 to 33 (PVAEKKPAAEKKEKKP) shows a compositional bias: basic and acidic residues. Residues 72–137 (KEEPINVTLP…EADCNLQLCK (66 aa)) enclose the TGS domain.

It belongs to the class-II aminoacyl-tRNA synthetase family.

Its subcellular location is the cytoplasm. It carries out the reaction tRNA(Thr) + L-threonine + ATP = L-threonyl-tRNA(Thr) + AMP + diphosphate + H(+). The polypeptide is Probable threonine--tRNA ligase 1, cytoplasmic (thrS1) (Dictyostelium discoideum (Social amoeba)).